The primary structure comprises 1318 residues: Tetratricopeptide repeat protein 41 (1318 aa).

TPR repeat units follow at residues 401–434 (PRLE…KPCI), 653–686 (WIQE…PVRE), 819–852 (GRII…LLQS), 860–893 (LRAQ…LLRF), 993–1029 (MEFL…KEKA), and 1047–1084 (SDTL…RAAH). Residues 1295–1318 (KPGFPRRSQIESKLLKTSDDPNKE) are disordered. Over residues 1302–1318 (SQIESKLLKTSDDPNKE) the composition is skewed to basic and acidic residues.

Highly expressed in lung and myeloid leukemia cell line (at protein level). Isoform 4: expressed in heart (at protein level).

It is found in the cytoplasm. The polypeptide is Tetratricopeptide repeat protein 41 (Mus musculus (Mouse)).